The primary structure comprises 277 residues: UPF0276 protein PSEEN3355 (277 aa).

This sequence belongs to the UPF0276 family.

In Pseudomonas entomophila (strain L48), this protein is UPF0276 protein PSEEN3355.